Consider the following 239-residue polypeptide: Peptidyl-tRNA hydrolase (239 aa).

Residue Y14 participates in tRNA binding. The Proton acceptor role is filled by H19. Positions 64, 66, and 112 each coordinate tRNA. The segment at 199–227 (EKPAQKGRSHIRQARPKAPPAELPSSGPM) is disordered. Residues 203-213 (QKGRSHIRQAR) show a composition bias toward basic residues.

Belongs to the PTH family. As to quaternary structure, monomer.

The protein localises to the cytoplasm. It catalyses the reaction an N-acyl-L-alpha-aminoacyl-tRNA + H2O = an N-acyl-L-amino acid + a tRNA + H(+). Hydrolyzes ribosome-free peptidyl-tRNAs (with 1 or more amino acids incorporated), which drop off the ribosome during protein synthesis, or as a result of ribosome stalling. In terms of biological role, catalyzes the release of premature peptidyl moieties from peptidyl-tRNA molecules trapped in stalled 50S ribosomal subunits, and thus maintains levels of free tRNAs and 50S ribosomes. The protein is Peptidyl-tRNA hydrolase of Chelativorans sp. (strain BNC1).